A 101-amino-acid polypeptide reads, in one-letter code: Biogenesis of lysosome-related organelles complex 1 subunit BLS1 (101 aa).

The protein belongs to the BLOC1S1 family. As to quaternary structure, component of the biogenesis of lysosome-related organelles complex-1 (BLOC-1).

It localises to the endosome. Functionally, component of the biogenesis of lysosome-related organelles complex-1 (BLOC-1), a complex involved in endosomal cargo sorting. This chain is Biogenesis of lysosome-related organelles complex 1 subunit BLS1 (BLS1), found in Zygosaccharomyces rouxii (strain ATCC 2623 / CBS 732 / NBRC 1130 / NCYC 568 / NRRL Y-229).